The following is a 236-amino-acid chain: Small ribosomal subunit protein uS3 (236 aa).

In terms of domain architecture, KH type-2 spans 39-107 (IREILHKELK…DVVINIVEIR (69 aa)). The tract at residues 213–236 (MAQDKRMNEGGGESSQPRSRRDAA) is disordered.

Belongs to the universal ribosomal protein uS3 family. In terms of assembly, part of the 30S ribosomal subunit. Forms a tight complex with proteins S10 and S14.

In terms of biological role, binds the lower part of the 30S subunit head. Binds mRNA in the 70S ribosome, positioning it for translation. This is Small ribosomal subunit protein uS3 from Bradyrhizobium sp. (strain BTAi1 / ATCC BAA-1182).